A 122-amino-acid polypeptide reads, in one-letter code: Ribosome-binding factor A (122 aa).

The protein belongs to the RbfA family. In terms of assembly, monomer. Binds 30S ribosomal subunits, but not 50S ribosomal subunits or 70S ribosomes.

The protein localises to the cytoplasm. In terms of biological role, one of several proteins that assist in the late maturation steps of the functional core of the 30S ribosomal subunit. Associates with free 30S ribosomal subunits (but not with 30S subunits that are part of 70S ribosomes or polysomes). Required for efficient processing of 16S rRNA. May interact with the 5'-terminal helix region of 16S rRNA. The polypeptide is Ribosome-binding factor A (Anaeromyxobacter sp. (strain Fw109-5)).